The primary structure comprises 31 residues: Cycloviolacin-O25 (31 aa).

A cross-link (cyclopeptide (Asp-Asn)) is located at residues 1–31; sequence DIFCGETCAFIPCITHVPGTCSCKSKVCYFN. Intrachain disulfides connect Cys-4–Cys-21, Cys-8–Cys-23, and Cys-13–Cys-28.

Post-translationally, this is a cyclic peptide. Expressed in roots and runners but not in leaves, petals and petioles (at protein level).

Probably participates in a plant defense mechanism. The protein is Cycloviolacin-O25 of Viola odorata (Sweet violet).